Reading from the N-terminus, the 456-residue chain is Adenylosuccinate lyase (456 aa).

N(6)-(1,2-dicarboxyethyl)-AMP is bound by residues R15 to Y16, N90 to D92, and T122 to S123. The Proton donor/acceptor role is filled by H171. Residue Q247 participates in N(6)-(1,2-dicarboxyethyl)-AMP binding. Residue S295 is the Proton donor/acceptor of the active site. Residues S296, K301–N303, N309, R335, and S340–R344 contribute to the N(6)-(1,2-dicarboxyethyl)-AMP site.

The protein belongs to the lyase 1 family. Adenylosuccinate lyase subfamily. As to quaternary structure, homotetramer. Residues from neighboring subunits contribute catalytic and substrate-binding residues to each active site.

The enzyme catalyses N(6)-(1,2-dicarboxyethyl)-AMP = fumarate + AMP. It catalyses the reaction (2S)-2-[5-amino-1-(5-phospho-beta-D-ribosyl)imidazole-4-carboxamido]succinate = 5-amino-1-(5-phospho-beta-D-ribosyl)imidazole-4-carboxamide + fumarate. It participates in purine metabolism; AMP biosynthesis via de novo pathway; AMP from IMP: step 2/2. The protein operates within purine metabolism; IMP biosynthesis via de novo pathway; 5-amino-1-(5-phospho-D-ribosyl)imidazole-4-carboxamide from 5-amino-1-(5-phospho-D-ribosyl)imidazole-4-carboxylate: step 2/2. Catalyzes two reactions in de novo purine nucleotide biosynthesis. Catalyzes the breakdown of 5-aminoimidazole- (N-succinylocarboxamide) ribotide (SAICAR or 2-[5-amino-1-(5-phospho-beta-D-ribosyl)imidazole-4-carboxamido]succinate) to 5-aminoimidazole-4-carboxamide ribotide (AICAR or 5-amino-1-(5-phospho-beta-D-ribosyl)imidazole-4-carboxamide) and fumarate, and of adenylosuccinate (ADS or N(6)-(1,2-dicarboxyethyl)-AMP) to adenosine monophosphate (AMP) and fumarate. The polypeptide is Adenylosuccinate lyase (purB) (Buchnera aphidicola subsp. Schizaphis graminum (strain Sg)).